The sequence spans 175 residues: SsrA-binding protein (175 aa).

2 disordered regions span residues 1-29 (MTRN…ERDA) and 152-175 (KRET…SRKS).

This sequence belongs to the SmpB family.

The protein resides in the cytoplasm. Functionally, required for rescue of stalled ribosomes mediated by trans-translation. Binds to transfer-messenger RNA (tmRNA), required for stable association of tmRNA with ribosomes. tmRNA and SmpB together mimic tRNA shape, replacing the anticodon stem-loop with SmpB. tmRNA is encoded by the ssrA gene; the 2 termini fold to resemble tRNA(Ala) and it encodes a 'tag peptide', a short internal open reading frame. During trans-translation Ala-aminoacylated tmRNA acts like a tRNA, entering the A-site of stalled ribosomes, displacing the stalled mRNA. The ribosome then switches to translate the ORF on the tmRNA; the nascent peptide is terminated with the 'tag peptide' encoded by the tmRNA and targeted for degradation. The ribosome is freed to recommence translation, which seems to be the essential function of trans-translation. The sequence is that of SsrA-binding protein from Koribacter versatilis (strain Ellin345).